The sequence spans 258 residues: 5-oxoprolinase subunit A (258 aa).

The protein belongs to the LamB/PxpA family. In terms of assembly, forms a complex composed of PxpA, PxpB and PxpC.

The enzyme catalyses 5-oxo-L-proline + ATP + 2 H2O = L-glutamate + ADP + phosphate + H(+). In terms of biological role, catalyzes the cleavage of 5-oxoproline to form L-glutamate coupled to the hydrolysis of ATP to ADP and inorganic phosphate. This is 5-oxoprolinase subunit A from Corynebacterium jeikeium (strain K411).